The following is a 132-amino-acid chain: Acid shock protein (132 aa).

The signal sequence occupies residues 1 to 21 (MKKVLALVVAAAMGLSSAAFA). Low complexity predominate over residues 20–45 (FAAETTTSSAAPATATATTTKAAPAK). The segment at 20 to 132 (FAAETTTSSA…AAKPAAQPAA (113 aa)) is disordered. A propeptide spanning residues 22 to 90 (AETTTSSAAP…TTAPVEQKAQ (69 aa)) is cleaved from the precursor. The segment covering 62–71 (AAKKHHKKAV) has biased composition (basic residues). 2 stretches are compositionally biased toward low complexity: residues 76–90 (AAPA…QKAQ) and 100–109 (AKPAVAQKAQ). Residues 110–119 (AAKKHHKKAV) are compositionally biased toward basic residues.

This sequence belongs to the Asr family. In terms of processing, proteolytic processing gives rise to the active protein.

It is found in the periplasm. Required for growth and/or survival at acidic conditions. This chain is Acid shock protein, found in Enterobacter sp. (strain 638).